Reading from the N-terminus, the 381-residue chain is Succinate--CoA ligase [ADP-forming] subunit beta (381 aa).

The region spanning 9–236 is the ATP-grasp domain; sequence KELLRVAGVP…ESSEAPSEVD (228 aa). ATP is bound by residues Lys45, 52 to 54, Ala94, and Glu99; that span reads GRG. Asn191 and Asp205 together coordinate Mg(2+). Substrate-binding positions include Asn256 and 313 to 315; that span reads GIT.

Belongs to the succinate/malate CoA ligase beta subunit family. As to quaternary structure, heterotetramer of two alpha and two beta subunits. Mg(2+) is required as a cofactor.

It catalyses the reaction succinate + ATP + CoA = succinyl-CoA + ADP + phosphate. The enzyme catalyses GTP + succinate + CoA = succinyl-CoA + GDP + phosphate. Its pathway is carbohydrate metabolism; tricarboxylic acid cycle; succinate from succinyl-CoA (ligase route): step 1/1. In terms of biological role, succinyl-CoA synthetase functions in the citric acid cycle (TCA), coupling the hydrolysis of succinyl-CoA to the synthesis of either ATP or GTP and thus represents the only step of substrate-level phosphorylation in the TCA. The beta subunit provides nucleotide specificity of the enzyme and binds the substrate succinate, while the binding sites for coenzyme A and phosphate are found in the alpha subunit. The chain is Succinate--CoA ligase [ADP-forming] subunit beta from Gemmatimonas aurantiaca (strain DSM 14586 / JCM 11422 / NBRC 100505 / T-27).